We begin with the raw amino-acid sequence, 474 residues long: Hepatocyte nuclear factor 4-alpha (474 aa).

Positions 57–132 form a DNA-binding region, nuclear receptor; it reads SALCAICGDR…AGMKKEAVQN (76 aa). 2 NR C4-type zinc fingers span residues 60-80 and 96-120; these read CAICGDRATGKHYGASSCDGC and CRFSRQCVVDKDKRNQCRYCRLKKC. A phosphoserine mark is found at Ser-142 and Ser-143. A Phosphotyrosine modification is found at Tyr-144. The 231-residue stretch at 147 to 377 folds into the NR LBD domain; sequence SSLPSINALL…NLLQEMLLGG (231 aa). Thr-166 bears the Phosphothreonine mark. Ser-167 carries the post-translational modification Phosphoserine. Glycyl lysine isopeptide (Lys-Gly) (interchain with G-Cter in ubiquitin) cross-links involve residues Lys-234 and Lys-307. Ser-313 bears the Phosphoserine; by AMPK mark. The 9aaTAD motif lies at 368-376; the sequence is NLLQEMLLG. The interval 413–450 is disordered; the sequence is SNGQMCEWPRPRGQAATPETPQPSPPSGSGSESYKLLP. Residues Thr-429 and Thr-432 each carry the phosphothreonine modification. Position 436 is a phosphoserine (Ser-436). Lys-458 bears the N6-acetyllysine mark.

Belongs to the nuclear hormone receptor family. NR2 subfamily. Homodimerization is required for HNF4-alpha to bind to its recognition site. Interacts with CLOCK, BMAL1 and PER1. Interacts with PER2. Interacts with CRY1 and CRY2. Interacts with NR0B2/SHP; the resulting heterodimer is transcriptionally inactive. Interacts with DDX3X; this interaction disrupts the interaction between HNF4 and NR0B2 that forms inactive heterodimers and enhances the formation of active HNF4 homodimers. In terms of processing, phosphorylated on tyrosine residue(s); phosphorylation is important for its DNA-binding activity. Phosphorylation may directly or indirectly play a regulatory role in the subnuclear distribution. Phosphorylation at Ser-313 by AMPK reduces the ability to form homodimers and bind DNA. Acetylation at Lys-458 lowers transcriptional activation by about two-fold. As to expression, expressed in the liver, pancreas and colon in a circadian manner.

The protein localises to the nucleus. Functionally, transcriptional regulator which controls the expression of hepatic genes during the transition of endodermal cells to hepatic progenitor cells, facilitatating the recruitment of RNA pol II to the promoters of target genes. Activates the transcription of CYP2C38. Represses the CLOCK-BMAL1 transcriptional activity and is essential for circadian rhythm maintenance and period regulation in the liver and colon cells. The protein is Hepatocyte nuclear factor 4-alpha (Hnf4a) of Mus musculus (Mouse).